The chain runs to 115 residues: Vitelline membrane protein Vm32E (115 aa).

An N-terminal signal peptide occupies residues 1-17 (MKIVAFTLVAFVALAGA). Residues 35–72 (GYPAPPCPTNYLFSCQPNLAPAPCAQEAPAYGSAGAYT) enclose the VM domain.

This sequence belongs to the vitelline membrane family.

The protein resides in the secreted. Its function is as follows. Major early eggshell protein. This is Vitelline membrane protein Vm32E from Drosophila yakuba (Fruit fly).